Here is a 119-residue protein sequence, read N- to C-terminus: MLIKKMICEVDAANAEAFAKAQSQWEALSHISGFIKQAGGWRKTIDEPLTAEIISVWENREAYDHFMENEHDSIYEENDQKAVILSIEVTVYEEDKPFVHDLLHNPDIRYEPNWTVLKA.

This is an uncharacterized protein from Bacillus subtilis (strain 168).